The primary structure comprises 122 residues: Large ribosomal subunit protein uL14c (122 aa).

It belongs to the universal ribosomal protein uL14 family. Part of the 50S ribosomal subunit.

It localises to the plastid. Its subcellular location is the chloroplast. In terms of biological role, binds to 23S rRNA. The protein is Large ribosomal subunit protein uL14c of Morus indica (Mulberry).